The primary structure comprises 159 residues: NADH-quinone oxidoreductase subunit B (159 aa).

Residues Cys-32, Cys-33, Cys-97, and Cys-126 each contribute to the [4Fe-4S] cluster site.

This sequence belongs to the complex I 20 kDa subunit family. NDH-1 is composed of 14 different subunits. Subunits NuoB, C, D, E, F, and G constitute the peripheral sector of the complex. It depends on [4Fe-4S] cluster as a cofactor.

Its subcellular location is the cell inner membrane. The catalysed reaction is a quinone + NADH + 5 H(+)(in) = a quinol + NAD(+) + 4 H(+)(out). In terms of biological role, NDH-1 shuttles electrons from NADH, via FMN and iron-sulfur (Fe-S) centers, to quinones in the respiratory chain. The immediate electron acceptor for the enzyme in this species is believed to be ubiquinone. Couples the redox reaction to proton translocation (for every two electrons transferred, four hydrogen ions are translocated across the cytoplasmic membrane), and thus conserves the redox energy in a proton gradient. The polypeptide is NADH-quinone oxidoreductase subunit B (Helicobacter acinonychis (strain Sheeba)).